Here is a 254-residue protein sequence, read N- to C-terminus: MWHLLPPSALLLLISSVTKAADPSKAVVLLDPPWVRVLTDDNVTLTCQGAYPPENNNTRWFHNGTHIVGSQAPSYLISGIKVENSGKYQCQTDLSPLSDSVQLQVHADWLVLQTSKWVFQKGESIRLRCHSWKNKRLYKVTYLQNGKPKKFFHNNSEFHIPEATVNHTGSYYCRGLIGHNNKSSGIVAITFQADFAGPSIAPLFPLWQQIAFCLMMGLLFAVDTGLYFFVRRDLRRSMVHKEEYNFKWSQAQDK.

The signal sequence occupies residues 1–20 (MWHLLPPSALLLLISSVTKA). At 21–209 (ADPSKAVVLL…IAPLFPLWQQ (189 aa)) the chain is on the extracellular side. Ig-like C2-type domains lie at 23 to 104 (PSKA…VQLQ) and 121 to 174 (KGES…YYCR). N-linked (GlcNAc...) asparagine glycosylation is found at Asn-42, Asn-63, Asn-166, and Asn-181. Intrachain disulfides connect Cys-47–Cys-90 and Cys-129–Cys-173. A helical transmembrane segment spans residues 210 to 230 (IAFCLMMGLLFAVDTGLYFFV). Topologically, residues 231–254 (RRDLRRSMVHKEEYNFKWSQAQDK) are cytoplasmic.

Forms a heterooligomeric complex with ITAM-containing signaling subunits FCER1G. Interacts (via transmembrane domain) with signaling subunits; this interaction is a prerequisite for receptor complex expression on the cell surface and intracellular signal transduction. Binds the Fc region of antigen-complexed IgG. In terms of processing, N-glycosylated. Post-translationally, phosphorylated following receptor ligation.

Its subcellular location is the cell membrane. In terms of biological role, receptor for the invariable Fc fragment of immunoglobulin gamma (IgG). Binds with intermediate affinity to both IgG2a and IgG2b. Can bind to IgG2a and IgG2b monomers. Does not display binding to IgG1 or IgG3. Recognizes neutralizing virus-specific IgGs displayed on the cell surface of infected cells and triggers antibody-dependent cellular cytotoxicity (ADCC). Confers protection to lethal influenza virus infection. On splenic dendritic cells, uptakes antigen immune complexes and efficiently divert them into MHC class I and II antigen presentation pathways to provide for superior priming of CD4-positive and CD8-positive T cell immune responses. Mediates neutrophil activation by IgG complexes redundantly with FCGR2A. Plays a role in promoting bone resorption by enhancing osteoclast differentiation following binding to IgG2a. Also acts as a receptor for the Fc region of immunoglobulin epsilon (IgE). Binds with low affinity to both the a and b allotypes of IgE. Has also been shown to bind to IgE allotype a only but not to allotype b. Binds aggregated IgE but not the monomeric form and bound monomeric IgG is readily displaced by IgE complexes. Binding to IgE promotes macrophage-mediated phagocytosis, antigen presentation to T cells, production of pro-inflammatory cytokines and the late phase of cutaneous allergic reactions. Mediates enhanced ADCC in response to afucosylated IgGs. This is Low affinity immunoglobulin gamma Fc region receptor III-A from Cavia porcellus (Guinea pig).